Reading from the N-terminus, the 674-residue chain is MAAKDIDDTKPDTAADEDASFDMSQAAVKRMIGEAKERGYITIDQLNAVMPPETVSGEQIEDVMSMLSEMGINVVEGEEVEESEGGEVVETGSGSREIAVAGAAGETLDRTDDPVRMYLREMGSVELLSREGEIAIAKRIEAGRNTMIAGLCESPLTFQAITIWRDELLSEEILLRDVIDLEATFGRSLDGDEGMEGMEGIEGPVVEGLDLETAEGAAPAARRPASDEPEYDADGNPISRIDEEEDDDDSSNMSLAAMEAALKPKVLETLELIARDYAKLAEMQDLRMSATLNEDGTFSVAEEAAYQKLRSEIVLLVNELHLHNNRIEALIDQLYGINRKIMSIDSGMVKLADAARINRREFIDEYRGYELDPTWMDRMSAKPARAWVTLFEKSRDKVEDLRHEMAQVGQYVGVDISEFRRIVNQVQKGEKEARQAKKEMVEANLRLVISIAKKYTNRGLQFLDLIQEGNIGLMKAVDKFEYRRGYKFSTYATWWIRQAITRSIADQARTIRIPVHMIETINKLVRTGRQMLHEIGREPTPEELAEKLQMPLEKVRKVMKIAKEPISLETPIGDEEDSQLGDFIEDKNAILPLDSAIQENLKETTTRVLASLTPREERVLRMRFGIGMNTDHTLEEVGQQFSVTRERIRQIEAKALRKLKHPSRSRKLRSFLDQ.

Residues 214–252 (AEGAAPAARRPASDEPEYDADGNPISRIDEEEDDDDSSN) are disordered. The segment at 440 to 510 (MVEANLRLVI…TRSIADQART (71 aa)) is sigma-70 factor domain-2. Positions 464–467 (DLIQ) match the Interaction with polymerase core subunit RpoC motif. A sigma-70 factor domain-3 region spans residues 519–595 (ETINKLVRTG…DKNAILPLDS (77 aa)). The interval 608-661 (VLASLTPREERVLRMRFGIGMNTDHTLEEVGQQFSVTRERIRQIEAKALRKLKH) is sigma-70 factor domain-4. A DNA-binding region (H-T-H motif) is located at residues 634 to 653 (LEEVGQQFSVTRERIRQIEA).

The protein belongs to the sigma-70 factor family. RpoD/SigA subfamily. In terms of assembly, interacts transiently with the RNA polymerase catalytic core.

The protein localises to the cytoplasm. Functionally, sigma factors are initiation factors that promote the attachment of RNA polymerase to specific initiation sites and are then released. This sigma factor is the primary sigma factor during exponential growth. In Rhodobacter capsulatus (strain ATCC BAA-309 / NBRC 16581 / SB1003), this protein is RNA polymerase sigma factor RpoD.